A 106-amino-acid polypeptide reads, in one-letter code: Large ribosomal subunit protein P2 (106 aa).

The interval 79–106 (GAGAVAEAKKEEPEEEEADDDMGFGLFD) is disordered. Positions 91 to 100 (PEEEEADDDM) are enriched in acidic residues.

The protein belongs to the eukaryotic ribosomal protein P1/P2 family. P1 and P2 exist as dimers at the large ribosomal subunit. Post-translationally, phosphorylated.

In terms of biological role, plays an important role in the elongation step of protein synthesis. The chain is Large ribosomal subunit protein P2 (LIP) from Leishmania infantum.